A 376-amino-acid chain; its full sequence is UPF0754 membrane protein Sca_1420 (376 aa).

A run of 2 helical transmembrane segments spans residues 4–24 (FLVI…TNII) and 356–376 (LLGF…ALFV).

The protein belongs to the UPF0754 family.

Its subcellular location is the cell membrane. The sequence is that of UPF0754 membrane protein Sca_1420 from Staphylococcus carnosus (strain TM300).